Consider the following 325-residue polypeptide: Lipid droplet-associated hydrolase (325 aa).

The active-site Nucleophile is serine 139. Active-site charge relay system residues include aspartate 271 and histidine 300.

The protein belongs to the AB hydrolase superfamily. LDAH family.

The protein localises to the lipid droplet. Its subcellular location is the endoplasmic reticulum. The catalysed reaction is a cholesterol ester + H2O = cholesterol + a fatty acid + H(+). Its function is as follows. Probable serine lipid hydrolase associated with lipid droplets. Has low cholesterol esterase activity. Appears to lack triglyceride lipase activity. Involved in cholesterol and triglyceride homeostasis; stimulates cellular triglyceride accumulation and cellular cholesterol release. Acts antagonistically with PNPLA2/ATGL in regulation of cellular lipid stores. May regulate triglyceride accumulation indirectly through stimulation of PNPLA2/ATGL ubiquitination and proteasomal degradation. Promotes microtubule-dependent lipid droplet fusion. Highly expressed in macrophage-rich areas in atherosclerotic lesions, suggesting that it could promote cholesterol ester turnover in macrophages. This Rattus norvegicus (Rat) protein is Lipid droplet-associated hydrolase.